The chain runs to 153 residues: Ribosome maturation factor RimP (153 aa).

The protein belongs to the RimP family.

The protein resides in the cytoplasm. In terms of biological role, required for maturation of 30S ribosomal subunits. The polypeptide is Ribosome maturation factor RimP (Burkholderia pseudomallei (strain 1710b)).